A 77-amino-acid chain; its full sequence is Translation initiation factor IF-1, chloroplastic (77 aa).

Residues 1 to 71 (MKEQKLIHEG…TRGRIIYRLR (71 aa)) form the S1-like domain.

This sequence belongs to the IF-1 family. As to quaternary structure, component of the 30S ribosomal translation pre-initiation complex which assembles on the 30S ribosome in the order IF-2 and IF-3, IF-1 and N-formylmethionyl-tRNA(fMet); mRNA recruitment can occur at any time during PIC assembly.

The protein localises to the plastid. It localises to the chloroplast. One of the essential components for the initiation of protein synthesis. Stabilizes the binding of IF-2 and IF-3 on the 30S subunit to which N-formylmethionyl-tRNA(fMet) subsequently binds. Helps modulate mRNA selection, yielding the 30S pre-initiation complex (PIC). Upon addition of the 50S ribosomal subunit IF-1, IF-2 and IF-3 are released leaving the mature 70S translation initiation complex. This is Translation initiation factor IF-1, chloroplastic from Phalaenopsis aphrodite subsp. formosana (Moth orchid).